Here is a 1363-residue protein sequence, read N- to C-terminus: Kinesin-like protein kif7 (1363 aa).

The region spanning 15–347 is the Kinesin motor domain; the sequence is AVQVAVRVRP…LNYAKRARNI (333 aa). ATP is bound at residue 94–101; sequence GQTGSGKT. 2 coiled-coil regions span residues 358–385 and 491–552; these read EPDR…SETR and EDWR…LLAQ. Over residues 603–622 the composition is skewed to polar residues; sequence DSSSYSEQTQWDGTHGNTHC. A disordered region spans residues 603-642; the sequence is DSSSYSEQTQWDGTHGNTHCESSRKLNRDEDGHMQTTRDK. Positions 623 to 640 are enriched in basic and acidic residues; it reads ESSRKLNRDEDGHMQTTR. Coiled-coil stretches lie at residues 714–1068 and 1116–1225; these read LLQA…AAIE and DKVV…LREM. Positions 1314–1346 are disordered; the sequence is IVQPGMNSTHWSGSTSLPVTRPRREPRRSSLNT. Over residues 1318 to 1331 the composition is skewed to polar residues; the sequence is GMNSTHWSGSTSLP.

This sequence belongs to the TRAFAC class myosin-kinesin ATPase superfamily. Kinesin family. KIF27 subfamily. In terms of assembly, binds microtubules. Interacts with gli1 and sufu.

The protein resides in the cytoplasm. Its subcellular location is the cytoskeleton. It is found in the cell projection. The protein localises to the cilium. Functionally, acts downstream of smo as an intracellular repressor of hedgehog signaling pathway, mainly through the suppression of gli1 activity. This negative regulatory effect is enhanced in conjunction with the suppressor of fused (sufu) protein. Positively regulates gli2a activity by promoting its dissociation from sufu. Involved in the regulation of microtubular dynamics. The protein is Kinesin-like protein kif7 (kif7) of Danio rerio (Zebrafish).